The following is a 164-amino-acid chain: uncharacterized protein (164 aa).

The span at 1–29 (MLCVRSSSSNLESDTYLSRYSTRASAGTG) shows a compositional bias: polar residues. Residues 1-62 (MLCVRSSSSN…SKPSNNKNID (62 aa)) form a disordered region. Positions 43–62 (SSDSSSSSSESKPSNNKNID) are enriched in low complexity.

This is an uncharacterized protein from Schizosaccharomyces pombe (strain 972 / ATCC 24843) (Fission yeast).